Reading from the N-terminus, the 299-residue chain is Probable lipid kinase YegS-like (299 aa).

The region spanning 2–133 (SRSAGSFLIL…IDIAHVNDKT (132 aa)) is the DAGKc domain. ATP contacts are provided by residues threonine 40, 66-72 (GDGTINE), and threonine 95. Residues leucine 215, aspartate 218, and leucine 220 each contribute to the Mg(2+) site. Glutamate 271 acts as the Proton acceptor in catalysis.

Belongs to the diacylglycerol/lipid kinase family. YegS lipid kinase subfamily. It depends on Mg(2+) as a cofactor. The cofactor is Ca(2+).

The protein localises to the cytoplasm. In terms of biological role, probably phosphorylates lipids; the in vivo substrate is unknown. The protein is Probable lipid kinase YegS-like of Cronobacter sakazakii (strain ATCC BAA-894) (Enterobacter sakazakii).